The following is a 409-amino-acid chain: Carbamoyl phosphate synthase arginine-specific small chain (409 aa).

In terms of domain architecture, Glutamine amidotransferase type-1 spans 197–389; it reads NVALIDCGVK…FDNMSQYRAL (193 aa). Cys277 acts as the Nucleophile in catalysis. Residues His362 and Glu364 contribute to the active site.

Belongs to the CarA family. Heterodimer composed of 2 chains; the small (or glutamine) chain promotes the hydrolysis of glutamine to ammonia, which is used by the large (or ammonia) chain to synthesize carbamoyl phosphate.

Its subcellular location is the cytoplasm. The catalysed reaction is hydrogencarbonate + L-glutamine + 2 ATP + H2O = carbamoyl phosphate + L-glutamate + 2 ADP + phosphate + 2 H(+). It catalyses the reaction L-glutamine + H2O = L-glutamate + NH4(+). It functions in the pathway amino-acid biosynthesis; L-arginine biosynthesis; carbamoyl phosphate from bicarbonate: step 1/1. In terms of biological role, small subunit of the arginine-specific carbamoyl phosphate synthase (CPSase). CPSase catalyzes the formation of carbamoyl phosphate from the ammonia moiety of glutamine, carbonate, and phosphate donated by ATP, constituting the first step of 2 biosynthetic pathways, one leading to arginine and/or urea and the other to pyrimidine nucleotides. The small subunit (glutamine amidotransferase) binds and cleaves glutamine to supply the large subunit with the substrate ammonia. The sequence is that of Carbamoyl phosphate synthase arginine-specific small chain (CPA1) from Kluyveromyces lactis (strain ATCC 8585 / CBS 2359 / DSM 70799 / NBRC 1267 / NRRL Y-1140 / WM37) (Yeast).